The following is a 134-amino-acid chain: Protein NrdI (134 aa).

This sequence belongs to the NrdI family.

Its function is as follows. Probably involved in ribonucleotide reductase function. This chain is Protein NrdI, found in Chromohalobacter salexigens (strain ATCC BAA-138 / DSM 3043 / CIP 106854 / NCIMB 13768 / 1H11).